A 375-amino-acid polypeptide reads, in one-letter code: Erythronate-4-phosphate dehydrogenase (375 aa).

Positions 45 and 66 each coordinate substrate. NAD(+) is bound by residues Asp146, Thr175, 206-208 (ASR), and Asp232. Arg208 is an active-site residue. The active site involves Glu237. Catalysis depends on His254, which acts as the Proton donor. Gly257 is an NAD(+) binding site. Tyr258 serves as a coordination point for substrate.

Belongs to the D-isomer specific 2-hydroxyacid dehydrogenase family. PdxB subfamily. As to quaternary structure, homodimer.

It is found in the cytoplasm. It catalyses the reaction 4-phospho-D-erythronate + NAD(+) = (R)-3-hydroxy-2-oxo-4-phosphooxybutanoate + NADH + H(+). It participates in cofactor biosynthesis; pyridoxine 5'-phosphate biosynthesis; pyridoxine 5'-phosphate from D-erythrose 4-phosphate: step 2/5. In terms of biological role, catalyzes the oxidation of erythronate-4-phosphate to 3-hydroxy-2-oxo-4-phosphonooxybutanoate. The chain is Erythronate-4-phosphate dehydrogenase from Photorhabdus laumondii subsp. laumondii (strain DSM 15139 / CIP 105565 / TT01) (Photorhabdus luminescens subsp. laumondii).